The primary structure comprises 351 residues: Uroporphyrinogen decarboxylase (351 aa).

Substrate contacts are provided by residues 25–29, phenylalanine 43, aspartate 74, tyrosine 151, serine 206, and histidine 325; that span reads RQAGR.

This sequence belongs to the uroporphyrinogen decarboxylase family. As to quaternary structure, homodimer.

It localises to the cytoplasm. It carries out the reaction uroporphyrinogen III + 4 H(+) = coproporphyrinogen III + 4 CO2. It functions in the pathway porphyrin-containing compound metabolism; protoporphyrin-IX biosynthesis; coproporphyrinogen-III from 5-aminolevulinate: step 4/4. Functionally, catalyzes the decarboxylation of four acetate groups of uroporphyrinogen-III to yield coproporphyrinogen-III. The polypeptide is Uroporphyrinogen decarboxylase (Chlorobaculum tepidum (strain ATCC 49652 / DSM 12025 / NBRC 103806 / TLS) (Chlorobium tepidum)).